The chain runs to 61 residues: Small ribosomal subunit protein uS14 (61 aa).

4 residues coordinate Zn(2+): Cys-24, Cys-27, Cys-40, and Cys-43.

Belongs to the universal ribosomal protein uS14 family. Zinc-binding uS14 subfamily. In terms of assembly, part of the 30S ribosomal subunit. Contacts proteins S3 and S10. Requires Zn(2+) as cofactor.

Binds 16S rRNA, required for the assembly of 30S particles and may also be responsible for determining the conformation of the 16S rRNA at the A site. This is Small ribosomal subunit protein uS14 from Clostridium kluyveri (strain NBRC 12016).